The sequence spans 412 residues: MTNYRVESSSGRAARKMRLALMGPAFIAAIGYIDPGNFATNIQAGASFGYQLLWVVVWANLMAMLIQILSAKLGIATGKNLAEQIRDHYPRPFVWFYWVQAEIIAMATDLAEFIGAAIGFKLILGVSLLQGAVLTGIATFLILMLQRRGQKPLEKVIGGLLLFVAAAYIVELIFSQPNLAQLGKGMVIPSLPTSEAVFLAAGVLGATIMPHVIYLHSSLTQHLHGGSRQQRYSATKWDVAIAMTIAGFVNLAMMATAAAAFHFSGHTGVADLDEAYLTLQPLLSHAAATVFGLSLVAAGLSSTVVGTLAGQVVMQGFIRFHIPLWVRRTVTMLPSFIVILMGLDPTRILVMSQVLLSFGIALALVPLLIFTSDSKLMGDLVNSKRVKQTGWVIVVLVVALNIWLLVGTALGL.

Residues methionine 1 to leucine 19 lie on the Cytoplasmic side of the membrane. A helical transmembrane segment spans residues alanine 20–alanine 39. Topologically, residues threonine 40–glutamine 51 are periplasmic. Residues leucine 52 to alanine 71 traverse the membrane as a helical segment. The Cytoplasmic portion of the chain corresponds to lysine 72 to tryptophan 95. The helical transmembrane segment at phenylalanine 96 to isoleucine 118 threads the bilayer. Residues glycine 119–glycine 125 lie on the Periplasmic side of the membrane. The helical transmembrane segment at valine 126–leucine 145 threads the bilayer. Residues glutamine 146 to lysine 155 are Cytoplasmic-facing. Residues valine 156–serine 175 traverse the membrane as a helical segment. Topologically, residues glutamine 176–alanine 196 are periplasmic. The helical transmembrane segment at valine 197–threonine 220 threads the bilayer. Topologically, residues glutamine 221–aspartate 238 are cytoplasmic. The helical transmembrane segment at valine 239–alanine 258 threads the bilayer. Residues alanine 259–tyrosine 276 are Periplasmic-facing. The chain crosses the membrane as a helical span at residues leucine 277–alanine 297. The Cytoplasmic portion of the chain corresponds to alanine 298–arginine 327. Residues arginine 328 to aspartate 344 traverse the membrane as a helical segment. The Periplasmic segment spans residues proline 345 to valine 350. Residues methionine 351–phenylalanine 370 traverse the membrane as a helical segment. The Cytoplasmic segment spans residues threonine 371–lysine 387. Residues glutamine 388–valine 406 traverse the membrane as a helical segment. Topologically, residues glycine 407 to leucine 412 are periplasmic.

This sequence belongs to the NRAMP family.

Its subcellular location is the cell inner membrane. In terms of biological role, h(+)-stimulated, divalent metal cation uptake system. This chain is Divalent metal cation transporter MntH, found in Escherichia coli O127:H6 (strain E2348/69 / EPEC).